The primary structure comprises 266 residues: Chymotrypsin-like elastase family member 1 (266 aa).

The first 16 residues, 1–16 (MLRFLVFASLVLYGHS), serve as a signal peptide directing secretion. Residues 17–26 (TQDFPETNAR) constitute a propeptide, activation peptide. Residues 27 to 264 (VVGGAEARRN…YISWMNNVIA (238 aa)) enclose the Peptidase S1 domain. A disulfide bridge links cysteine 56 with cysteine 72. Histidine 71 acts as the Charge relay system in catalysis. Positions 85, 87, 90, and 95 each coordinate Ca(2+). Residue aspartate 119 is the Charge relay system of the active site. Cystine bridges form between cysteine 153–cysteine 220, cysteine 184–cysteine 200, and cysteine 210–cysteine 240. Serine 214 acts as the Charge relay system in catalysis.

This sequence belongs to the peptidase S1 family. Elastase subfamily. Ca(2+) is required as a cofactor. As to expression, pancreas.

It is found in the secreted. It carries out the reaction Hydrolysis of proteins, including elastin. Preferential cleavage: Ala-|-Xaa.. In terms of biological role, serine proteases that hydrolyze many proteins in addition to elastin. In Rattus norvegicus (Rat), this protein is Chymotrypsin-like elastase family member 1 (Cela1).